The primary structure comprises 184 residues: Ribosome-recycling factor (184 aa).

It belongs to the RRF family.

It is found in the cytoplasm. Functionally, responsible for the release of ribosomes from messenger RNA at the termination of protein biosynthesis. May increase the efficiency of translation by recycling ribosomes from one round of translation to another. This is Ribosome-recycling factor from Acholeplasma laidlawii (strain PG-8A).